Here is a 268-residue protein sequence, read N- to C-terminus: Undecaprenyl-diphosphatase (268 aa).

The next 8 helical transmembrane spans lie at 3 to 23 (VFNL…EFIP), 46 to 66 (FEVL…SAKL), 84 to 104 (FGIL…HGFI), 107 to 127 (VLFE…FILL), 144 to 164 (YPLP…IPGV), 184 to 204 (AAEF…AYDL), 218 to 238 (LIGV…RYLL), and 248 to 268 (LFGW…LVWG).

Belongs to the UppP family.

It is found in the cell inner membrane. The enzyme catalyses di-trans,octa-cis-undecaprenyl diphosphate + H2O = di-trans,octa-cis-undecaprenyl phosphate + phosphate + H(+). In terms of biological role, catalyzes the dephosphorylation of undecaprenyl diphosphate (UPP). Confers resistance to bacitracin. This chain is Undecaprenyl-diphosphatase, found in Brucella anthropi (strain ATCC 49188 / DSM 6882 / CCUG 24695 / JCM 21032 / LMG 3331 / NBRC 15819 / NCTC 12168 / Alc 37) (Ochrobactrum anthropi).